The sequence spans 179 residues: Inner membrane-spanning protein YciB (179 aa).

A run of 5 helical transmembrane segments spans residues 22–42 (IYAA…YSWV), 50–70 (MALI…FFHN), 76–96 (WKVT…QWVM), 121–141 (LAWA…AFWL), and 149–169 (FKVF…GIYI).

It belongs to the YciB family.

Its subcellular location is the cell inner membrane. Plays a role in cell envelope biogenesis, maintenance of cell envelope integrity and membrane homeostasis. In Shigella dysenteriae serotype 1 (strain Sd197), this protein is Inner membrane-spanning protein YciB.